A 151-amino-acid chain; its full sequence is Large ribosomal subunit protein bL9 (151 aa).

Belongs to the bacterial ribosomal protein bL9 family.

Functionally, binds to the 23S rRNA. This is Large ribosomal subunit protein bL9 from Pelodictyon phaeoclathratiforme (strain DSM 5477 / BU-1).